Reading from the N-terminus, the 140-residue chain is Ribosome-binding factor A (140 aa).

A disordered region spans residues 1 to 23 (MLRDRNRSGVRGGAEGPSQRQRR).

The protein belongs to the RbfA family. In terms of assembly, monomer. Binds 30S ribosomal subunits, but not 50S ribosomal subunits or 70S ribosomes.

Its subcellular location is the cytoplasm. In terms of biological role, one of several proteins that assist in the late maturation steps of the functional core of the 30S ribosomal subunit. Associates with free 30S ribosomal subunits (but not with 30S subunits that are part of 70S ribosomes or polysomes). Required for efficient processing of 16S rRNA. May interact with the 5'-terminal helix region of 16S rRNA. The polypeptide is Ribosome-binding factor A (Acidiphilium cryptum (strain JF-5)).